Consider the following 166-residue polypeptide: NAD(P)H-quinone oxidoreductase subunit I, chloroplastic (166 aa).

2 4Fe-4S ferredoxin-type domains span residues 55–84 and 95–124; these read GRIH…VDWK and LNYS…MTEE. 8 residues coordinate [4Fe-4S] cluster: Cys-64, Cys-67, Cys-70, Cys-74, Cys-104, Cys-107, Cys-110, and Cys-114.

It belongs to the complex I 23 kDa subunit family. NDH is composed of at least 16 different subunits, 5 of which are encoded in the nucleus. [4Fe-4S] cluster serves as cofactor.

The protein resides in the plastid. The protein localises to the chloroplast thylakoid membrane. The catalysed reaction is a plastoquinone + NADH + (n+1) H(+)(in) = a plastoquinol + NAD(+) + n H(+)(out). It catalyses the reaction a plastoquinone + NADPH + (n+1) H(+)(in) = a plastoquinol + NADP(+) + n H(+)(out). In terms of biological role, NDH shuttles electrons from NAD(P)H:plastoquinone, via FMN and iron-sulfur (Fe-S) centers, to quinones in the photosynthetic chain and possibly in a chloroplast respiratory chain. The immediate electron acceptor for the enzyme in this species is believed to be plastoquinone. Couples the redox reaction to proton translocation, and thus conserves the redox energy in a proton gradient. The chain is NAD(P)H-quinone oxidoreductase subunit I, chloroplastic from Raillardella argentea (Silky raillardella).